Reading from the N-terminus, the 356-residue chain is Protein RecA (356 aa).

G68 to T75 is a binding site for ATP.

The protein belongs to the RecA family.

The protein resides in the cytoplasm. Its function is as follows. Can catalyze the hydrolysis of ATP in the presence of single-stranded DNA, the ATP-dependent uptake of single-stranded DNA by duplex DNA, and the ATP-dependent hybridization of homologous single-stranded DNAs. It interacts with LexA causing its activation and leading to its autocatalytic cleavage. The polypeptide is Protein RecA (Thermotoga petrophila (strain ATCC BAA-488 / DSM 13995 / JCM 10881 / RKU-1)).